The chain runs to 144 residues: Large ribosomal subunit protein uL11 (144 aa).

The protein belongs to the universal ribosomal protein uL11 family. Part of the ribosomal stalk of the 50S ribosomal subunit. Interacts with L10 and the large rRNA to form the base of the stalk. L10 forms an elongated spine to which L12 dimers bind in a sequential fashion forming a multimeric L10(L12)X complex. One or more lysine residues are methylated.

Forms part of the ribosomal stalk which helps the ribosome interact with GTP-bound translation factors. In Corynebacterium efficiens (strain DSM 44549 / YS-314 / AJ 12310 / JCM 11189 / NBRC 100395), this protein is Large ribosomal subunit protein uL11.